The sequence spans 625 residues: Threonine--tRNA ligase (625 aa).

The editing domain stretch occupies residues 1-149 (MRVLLIHAKR…RNYEAKTTAR (149 aa)). Catalytic stretches follow at residues 197 to 494 (NPVN…PYIP) and 198 to 494 (PVNK…PYIP). Positions 291, 342, and 463 each coordinate Zn(2+).

Belongs to the class-II aminoacyl-tRNA synthetase family. Homodimer. Zn(2+) serves as cofactor.

The protein localises to the cytoplasm. The enzyme catalyses tRNA(Thr) + L-threonine + ATP = L-threonyl-tRNA(Thr) + AMP + diphosphate + H(+). In terms of biological role, catalyzes the attachment of threonine to tRNA(Thr) in a two-step reaction: L-threonine is first activated by ATP to form Thr-AMP and then transferred to the acceptor end of tRNA(Thr). Also edits incorrectly charged L-seryl-tRNA(Thr). The sequence is that of Threonine--tRNA ligase from Hyperthermus butylicus (strain DSM 5456 / JCM 9403 / PLM1-5).